We begin with the raw amino-acid sequence, 417 residues long: Tyrosine aminotransferase (417 aa).

Lys-249 is subject to N6-(pyridoxal phosphate)lysine.

Belongs to the class-I pyridoxal-phosphate-dependent aminotransferase family. Homodimer. It depends on pyridoxal 5'-phosphate as a cofactor.

It catalyses the reaction L-tyrosine + 2-oxoglutarate = 3-(4-hydroxyphenyl)pyruvate + L-glutamate. Its pathway is amino-acid degradation; L-phenylalanine degradation; acetoacetate and fumarate from L-phenylalanine: step 2/6. Functionally, transaminase involved in tyrosine breakdown. Converts tyrosine to p-hydroxyphenylpyruvate. Has much lower affinity and transaminase activity towards phenylalanine. This is Tyrosine aminotransferase (tat) from Dictyostelium discoideum (Social amoeba).